A 526-amino-acid chain; its full sequence is Glucose-6-phosphate isomerase (526 aa).

Glu347 acts as the Proton donor in catalysis. Active-site residues include His378 and Lys493.

Belongs to the GPI family.

The protein resides in the cytoplasm. The catalysed reaction is alpha-D-glucose 6-phosphate = beta-D-fructose 6-phosphate. The protein operates within carbohydrate biosynthesis; gluconeogenesis. It functions in the pathway carbohydrate degradation; glycolysis; D-glyceraldehyde 3-phosphate and glycerone phosphate from D-glucose: step 2/4. Catalyzes the reversible isomerization of glucose-6-phosphate to fructose-6-phosphate. The polypeptide is Glucose-6-phosphate isomerase (Chlamydia pneumoniae (Chlamydophila pneumoniae)).